We begin with the raw amino-acid sequence, 1553 residues long: MELLDSPAPLRPLHDNPRLPKADGAQKRLSVERIYQKKTQLEHILLRPDTYIGSVETVTQQMWVFDEDVGLNCRDVTFVPGLYKIFDEILVNAADNKQRDKSMSCIKVTIDPENNTISVWNNGKGIPVVEHKVEKVYVPALIFGQLLTSSNYDDDEKKVTGGRNGYGAKLCNIFSTKFTVETACREYKKLFKQTWTDNMGKAGEMTLKHFDGEDYTCVTFQPDLSKFKMTILDKDIVALMSRRAYDIAGSTKDVKVFLNGKRLPVKGFRSYVDLYLKDKVDETGNALKVIHEEVNSRWEVCLTLSEKGFQQVSFVNSIATTKGGRHVDYVADQIVTKLIDVVKKKNKNGVGVKPFQVKNHMWIFVNSLIENPTFDSQTKENMTLQAKSFGSTCKLSEKFIKGAVGCGIVESILNWVKFKAQTQLNKKCSAVKHTKIKGVPKLDDANDAGSKNSIDCTLILTEGDSAKTLAVSGLGVVGRDKYGVFPLRGKMLNVREASHKQIMENAEINNIIKIVGLQYKKNYEDRESLKSLRYGKIMIMTDQDQDGSHIKGLLINFIHHNWPSLLRHNFLEEFITPIIKVSKNKEEIPFYSIPEFEEWKSSTQNYNSWKIKYYKGLGTSTSKEAKEYFADMARHRIGFKYSGPEDDAAITLAFSKKKVEERKEWLTNFMEDRRQRNVHGLPEDYLYGKDTNYLTYNDFINKELVLFSNSDNERSIPSLVDGLKPGQRKVLFTCFKRNDKREVKGAQLAGSVAEMSSYHHGEASLMMTIINLAQNFVGSNNLNLLQPIGQFGTRLHGGKDSASPRYIFTMLSPLARLLFPPVDDNVLRFLYDDNQRVEPEWYMPIIPMVLINGAEGIGTGWSCKIPNFDIRETVNNIRCLLDGKEPLPMLPSYKNFKGTIDELGPNQYVISGEVSILDSTTIEITELPVRTWTQTYKEQVLEPMLNGTEKTPPLITDYKEYHTDTTVKFVVKMSEEKLAEAEAVGLHKVFKLQTNLTCNSMVLFDHVGFLKKYESPQDILKEFFELRLRYYGLRKEWLIGMLGAESAKLNNQARFILEKIDGKIVIENKPKKELIQVLIQRGYESDPVKAWKELQNKEEEEGDESGEESAAATGPDFNYLLNMPLWYLTKEKKDELCKQRDNKDKELEDLKHKSPSDLWKEDLAAFVEELDAVEAKQMQDEMAGITGKPLKVKGGKQGGKQKVTKAQLAEVMPSPHGIRVVPRVTAEMKAEAEKRIKKKIKSEKNESDEKQEGNSSGDKEPSSLKQRLAQKRKAEQGTKRQTTLPFKPIKKMKRNPWSDSESDSESDDFEVPSKRERVVRQAAAKIKPMVNSDSDADLTSSDEDSEYQENSEGNTDSDTTSKKKPPKAKAVPKEKKGKAPKEKPLPDAVPVRVQNVAAESASQDPAAPPVSVPRAQAVPKKPAAAKKGSTAKDNQPSIMDILTKKKAAPKAPRRAQREESPPSEATAAVAKKPGPPRGRKATKRLTSSSDSDSDFGSRPSKSVAAKKSKRDDDDSYSIDLTADSPAAAAPRTRPGRLKKPVQYLESSDEDDMF.

The interval 1-25 (MELLDSPAPLRPLHDNPRLPKADGA) is disordered. The segment covering 12-25 (PLHDNPRLPKADGA) has biased composition (basic and acidic residues). Residues N92, N121, 149–151 (SSN), and 162–169 (GRNGYGAK) each bind ATP. An interaction with DNA region spans residues 343–345 (KKK). ATP is bound at residue 377–379 (QTK). In terms of domain architecture, Toprim spans 456-573 (CTLILTEGDS…SLLRHNFLEE (118 aa)). Mg(2+) is bound by residues E462, D542, and D544. In terms of domain architecture, Topo IIA-type catalytic spans 716–1163 (IPSLVDGLKP…SPSDLWKEDL (448 aa)). The O-(5'-phospho-DNA)-tyrosine intermediate role is filled by Y806. The tract at residues 991–1000 (KLQTNLTCNS) is interaction with DNA. Disordered regions lie at residues 1095-1114 (QNKEEEEGDESGEESAAATG) and 1186-1553 (TGKP…DDMF). Acidic residues predominate over residues 1098-1107 (EEEEGDESGE). Positions 1242-1262 (SEKNESDEKQEGNSSGDKEPS) are enriched in basic and acidic residues. Composition is skewed to acidic residues over residues 1300–1310 (SESDSESDDFE) and 1334–1349 (SDADLTSSDEDSEYQE). Residues 1371–1385 (VPKEKKGKAPKEKPL) show a composition bias toward basic and acidic residues. The segment covering 1413-1432 (PRAQAVPKKPAAAKKGSTAK) has biased composition (low complexity). The span at 1444–1454 (KKKAAPKAPRR) shows a compositional bias: basic residues. Residues 1517 to 1532 (SIDLTADSPAAAAPRT) are compositionally biased toward low complexity.

This sequence belongs to the type II topoisomerase family. In terms of assembly, homodimer. The cofactor is Mg(2+). Requires Mn(2+) as cofactor. It depends on Ca(2+) as a cofactor.

The protein resides in the cytoplasm. It is found in the nucleus. Its subcellular location is the nucleoplasm. The protein localises to the nucleolus. It carries out the reaction ATP-dependent breakage, passage and rejoining of double-stranded DNA.. Key decatenating enzyme that alters DNA topology by binding to two double-stranded DNA molecules, generating a double-stranded break in one of the strands, passing the intact strand through the broken strand, and religating the broken strand. May play a role in the regulation of circadian rhythm. The sequence is that of DNA topoisomerase 2-alpha (TOP2A) from Gallus gallus (Chicken).